The primary structure comprises 367 residues: Heme A synthase (367 aa).

Transmembrane regions (helical) follow at residues 26–46 (IRGW…VGGA), 111–131 (LLAR…WLTG), 139–159 (LPLL…WWMV), 174–194 (LATH…IYRG), and 212–232 (AGII…VAGL). Histidine 274 contacts heme. The next 3 helical transmembrane spans lie at 276 to 296 (AGAY…LRAA), 305 to 325 (SVLL…TLLL), and 327 to 347 (VPIV…GFAI). Histidine 335 serves as a coordination point for heme.

It belongs to the COX15/CtaA family. Type 2 subfamily. As to quaternary structure, interacts with CtaB. Heme b serves as cofactor.

It is found in the cell membrane. It catalyses the reaction Fe(II)-heme o + 2 A + H2O = Fe(II)-heme a + 2 AH2. It functions in the pathway porphyrin-containing compound metabolism; heme A biosynthesis; heme A from heme O: step 1/1. In terms of biological role, catalyzes the conversion of heme O to heme A by two successive hydroxylations of the methyl group at C8. The first hydroxylation forms heme I, the second hydroxylation results in an unstable dihydroxymethyl group, which spontaneously dehydrates, resulting in the formyl group of heme A. This Sinorhizobium fredii (strain NBRC 101917 / NGR234) protein is Heme A synthase.